Reading from the N-terminus, the 147-residue chain is Protein phosphatase 1 regulatory subunit 14B (147 aa).

Residues 1–15 (MADSGPAGGAALAAP) show a composition bias toward low complexity. A disordered region spans residues 1 to 55 (MADSGPAGGAALAAPAPGPGSGGAGPRVYFQSPPGAAGEGPGGADDEGPVRRQGK). N-acetylalanine is present on Ala-2. Ser-21 carries the post-translational modification Phosphoserine. A Phosphotyrosine modification is found at Tyr-29. Ser-32 bears the Phosphoserine mark. Thr-57 is subject to Phosphothreonine. A coiled-coil region spans residues 61–103 (DRKELRKRLNLEEWILEQLTRLYDCQEEEIPELEIDVDELLDM).

This sequence belongs to the PP1 inhibitor family. Phosphorylated primarily on Thr-57 by PKC (in vitro). An unknown Ser is also phosphorylated by PKC (in vitro).

The protein localises to the cytoplasm. Inhibitor of PPP1CA. Has over 50-fold higher inhibitory activity when phosphorylated. The sequence is that of Protein phosphatase 1 regulatory subunit 14B (PPP1R14B) from Sus scrofa (Pig).